The sequence spans 529 residues: Bifunctional purine biosynthesis protein PurH (529 aa).

One can recognise an MGS-like domain in the interval 1-148 (MQQRRPIRRA…KNHKDVAIVV (148 aa)).

Belongs to the PurH family.

The enzyme catalyses (6R)-10-formyltetrahydrofolate + 5-amino-1-(5-phospho-beta-D-ribosyl)imidazole-4-carboxamide = 5-formamido-1-(5-phospho-D-ribosyl)imidazole-4-carboxamide + (6S)-5,6,7,8-tetrahydrofolate. It carries out the reaction IMP + H2O = 5-formamido-1-(5-phospho-D-ribosyl)imidazole-4-carboxamide. Its pathway is purine metabolism; IMP biosynthesis via de novo pathway; 5-formamido-1-(5-phospho-D-ribosyl)imidazole-4-carboxamide from 5-amino-1-(5-phospho-D-ribosyl)imidazole-4-carboxamide (10-formyl THF route): step 1/1. The protein operates within purine metabolism; IMP biosynthesis via de novo pathway; IMP from 5-formamido-1-(5-phospho-D-ribosyl)imidazole-4-carboxamide: step 1/1. The protein is Bifunctional purine biosynthesis protein PurH of Yersinia pseudotuberculosis serotype IB (strain PB1/+).